A 127-amino-acid chain; its full sequence is Large ribosomal subunit protein bL17 (127 aa).

Belongs to the bacterial ribosomal protein bL17 family. In terms of assembly, part of the 50S ribosomal subunit. Contacts protein L32.

The sequence is that of Large ribosomal subunit protein bL17 from Limosilactobacillus reuteri (strain DSM 20016) (Lactobacillus reuteri).